The following is a 308-amino-acid chain: F420-non-reducing hydrogenase subunit G (308 aa).

This sequence belongs to the [NiFe]/[NiFeSe] hydrogenase small subunit family. In terms of assembly, the F420-non-reducing hydrogenase is composed of three subunits; MvhA, MvhD and MvhG. It forms a complex with the heterodisulfide reductase (hdr).

Its function is as follows. Part of a complex that provides reducing equivalents for heterodisulfide reductase. This is F420-non-reducing hydrogenase subunit G (mvhG) from Methanothermobacter thermautotrophicus (strain ATCC 29096 / DSM 1053 / JCM 10044 / NBRC 100330 / Delta H) (Methanobacterium thermoautotrophicum).